Here is a 211-residue protein sequence, read N- to C-terminus: Thiamine-phosphate synthase (211 aa).

4-amino-2-methyl-5-(diphosphooxymethyl)pyrimidine is bound by residues 37–41 and Asn-69; that span reads QLRIK. Mg(2+)-binding residues include Asp-70 and Asp-89. Residue Ser-108 coordinates 4-amino-2-methyl-5-(diphosphooxymethyl)pyrimidine. 2-[(2R,5Z)-2-carboxy-4-methylthiazol-5(2H)-ylidene]ethyl phosphate is bound at residue 134-136; that stretch reads TQT. Position 137 (Lys-137) interacts with 4-amino-2-methyl-5-(diphosphooxymethyl)pyrimidine. 2-[(2R,5Z)-2-carboxy-4-methylthiazol-5(2H)-ylidene]ethyl phosphate contacts are provided by residues Gly-166 and 186 to 187; that span reads VS.

This sequence belongs to the thiamine-phosphate synthase family. Requires Mg(2+) as cofactor.

The enzyme catalyses 2-[(2R,5Z)-2-carboxy-4-methylthiazol-5(2H)-ylidene]ethyl phosphate + 4-amino-2-methyl-5-(diphosphooxymethyl)pyrimidine + 2 H(+) = thiamine phosphate + CO2 + diphosphate. It catalyses the reaction 2-(2-carboxy-4-methylthiazol-5-yl)ethyl phosphate + 4-amino-2-methyl-5-(diphosphooxymethyl)pyrimidine + 2 H(+) = thiamine phosphate + CO2 + diphosphate. The catalysed reaction is 4-methyl-5-(2-phosphooxyethyl)-thiazole + 4-amino-2-methyl-5-(diphosphooxymethyl)pyrimidine + H(+) = thiamine phosphate + diphosphate. The protein operates within cofactor biosynthesis; thiamine diphosphate biosynthesis; thiamine phosphate from 4-amino-2-methyl-5-diphosphomethylpyrimidine and 4-methyl-5-(2-phosphoethyl)-thiazole: step 1/1. Condenses 4-methyl-5-(beta-hydroxyethyl)thiazole monophosphate (THZ-P) and 2-methyl-4-amino-5-hydroxymethyl pyrimidine pyrophosphate (HMP-PP) to form thiamine monophosphate (TMP). This is Thiamine-phosphate synthase from Escherichia coli (strain SE11).